Here is a 331-residue protein sequence, read N- to C-terminus: Vitamin B12 import system permease protein BtuC (331 aa).

The next 9 membrane-spanning stretches (helical) occupy residues 20–42, 62–84, 91–113, 117–136, 148–170, 190–209, 240–262, 277–299, and 306–325; these read LLIGLFLSVCVLYLLVGELWLSP, LLAAAVIGASLAVAGATLQVLLG, GVVGVSGGASVAMVILLLFFPSL, VAFMAAAVLGALLFTLLLVV, LLLVGVALGILSGAVVTWAFYFS, SWYQHLLSLVAVPVVIWLVL, LAIALLVGASVALGGVIGFVGLV, LLLPLSALCGALLLVSADLIARL, and LPLGVVTTTLGAPIFIWMLV.

Belongs to the binding-protein-dependent transport system permease family. FecCD subfamily. In terms of assembly, the complex is composed of two ATP-binding proteins (BtuD), two transmembrane proteins (BtuC) and a solute-binding protein (BtuF).

Its subcellular location is the cell inner membrane. In terms of biological role, part of the ABC transporter complex BtuCDF involved in vitamin B12 import. Involved in the translocation of the substrate across the membrane. The chain is Vitamin B12 import system permease protein BtuC from Vibrio cholerae serotype O1 (strain ATCC 39315 / El Tor Inaba N16961).